Reading from the N-terminus, the 191-residue chain is Protein Ves (191 aa).

This sequence belongs to the Ves family.

The chain is Protein Ves from Escherichia coli (strain UTI89 / UPEC).